The sequence spans 271 residues: Ribosomal RNA small subunit methyltransferase A (271 aa).

S-adenosyl-L-methionine-binding residues include asparagine 18, leucine 20, glycine 45, glutamate 66, aspartate 91, and asparagine 112.

This sequence belongs to the class I-like SAM-binding methyltransferase superfamily. rRNA adenine N(6)-methyltransferase family. RsmA subfamily.

It localises to the cytoplasm. The catalysed reaction is adenosine(1518)/adenosine(1519) in 16S rRNA + 4 S-adenosyl-L-methionine = N(6)-dimethyladenosine(1518)/N(6)-dimethyladenosine(1519) in 16S rRNA + 4 S-adenosyl-L-homocysteine + 4 H(+). Its function is as follows. Specifically dimethylates two adjacent adenosines (A1518 and A1519) in the loop of a conserved hairpin near the 3'-end of 16S rRNA in the 30S particle. May play a critical role in biogenesis of 30S subunits. The protein is Ribosomal RNA small subunit methyltransferase A of Vibrio atlanticus (strain LGP32) (Vibrio splendidus (strain Mel32)).